Reading from the N-terminus, the 545-residue chain is MSAKDVKFGVDARDKMLRGVDILANAVKVTLGPKGRNVVLEKSFGAPRITKDGVTVAKEIELDDKFENMGAQMVREVASKSADAAGDGTTTATVLAQAIVKEGAKSVAAGMNPMDLKRGIDLAVEAVVADLSRNSKKVTSNEEIAQVGTISANGDSEIGKFLADAMKKVGNEGVITVEEAKSLETELDVVEGMQFDRGYISPYFVTNAEKMRVEMDDAYILINEKKLSSLNELLPLLEAVVQTGKPLVIVAEDVEGEALATLVVNRLRGGLKVAAVKAPGFGDRRKAMLQDIAILTGGQAISEDLGIKLENVTLQMLGRAKKVMIDKENTTIVNGAGKKADIEARVAQIKAQIEETTSDYDREKLQERLAKLAGGVAVIRVGGATEVEVKERKDRVDDAMHATRAAVEEGIVPGGGVALLRASEQLKRIKTQNDDQKTGVEIVRKALSAPARQIAINAGEDGSVIVGKILEKEQYSYGFDSQTGDYGNLISKGIIDPTKVVRTAIQNAASVASLLITTEAMVAELPKKNSPAPAMPGGGMGGMDF.

ATP is bound by residues 30 to 33 (TLGP), Lys51, 87 to 91 (DGTTT), Gly415, and Asp496.

Belongs to the chaperonin (HSP60) family. As to quaternary structure, forms a cylinder of 14 subunits composed of two heptameric rings stacked back-to-back. Interacts with the co-chaperonin GroES.

It localises to the cytoplasm. The catalysed reaction is ATP + H2O + a folded polypeptide = ADP + phosphate + an unfolded polypeptide.. Functionally, together with its co-chaperonin GroES, plays an essential role in assisting protein folding. The GroEL-GroES system forms a nano-cage that allows encapsulation of the non-native substrate proteins and provides a physical environment optimized to promote and accelerate protein folding. This Nitrobacter winogradskyi (strain ATCC 25391 / DSM 10237 / CIP 104748 / NCIMB 11846 / Nb-255) protein is Chaperonin GroEL 2.